Consider the following 133-residue polypeptide: Ribonuclease P protein component (133 aa).

This sequence belongs to the RnpA family. As to quaternary structure, consists of a catalytic RNA component (M1 or rnpB) and a protein subunit.

It carries out the reaction Endonucleolytic cleavage of RNA, removing 5'-extranucleotides from tRNA precursor.. In terms of biological role, RNaseP catalyzes the removal of the 5'-leader sequence from pre-tRNA to produce the mature 5'-terminus. It can also cleave other RNA substrates such as 4.5S RNA. The protein component plays an auxiliary but essential role in vivo by binding to the 5'-leader sequence and broadening the substrate specificity of the ribozyme. This is Ribonuclease P protein component from Corynebacterium glutamicum (strain R).